The following is a 387-amino-acid chain: MLHRIPAFIRPRPFSGLPLSCGNREVSVAASVLPAAGSGAVRTENTIQRHFCTSRSICSKKDDQSVPANETSQKAAESQGEGKETLKKNLLDVIKDMKVQLNTANVKTTKPRGRQPPAHLETAVGRLQKALGEPPRKRNEFLSPELVAAASAVADSLPFDKQTTKSELLKQLQQHEEESRAQTDRQKRRVSFTQIISNMKIAKSPSMRVSSRPQHQIQFDEEVDSSLSQEKPADFRRRKCLFKGKRLSIFDVKAFDDEAPEPEAAPSLWEIEFAKQLATVSEQPFGNGFEEMIQWTKEGKLWEFPVNNEAGLDDDGSEFHEHIFLEKHLEDFPKQGPIRLFMELVTCGLSKNPYLSVRQKVEHIEWFRNYFNEKRDILKENNIHLTS.

A mitochondrion-targeting transit peptide spans 1 to 56 (MLHRIPAFIRPRPFSGLPLSCGNREVSVAASVLPAAGSGAVRTENTIQRHFCTSRS). Disordered regions lie at residues 59–83 (SKKD…GEGK) and 203–228 (KSPS…SSLS). Composition is skewed to polar residues over residues 66-76 (VPANETSQKAA) and 207-217 (MRVSSRPQHQI).

Belongs to the mitochondrion-specific ribosomal protein mS31 family. As to quaternary structure, component of the mitochondrial ribosome small subunit (28S) which comprises a 12S rRNA and about 30 distinct proteins.

It is found in the mitochondrion. The sequence is that of Small ribosomal subunit protein mS31 (Mrps31) from Rattus norvegicus (Rat).